A 217-amino-acid chain; its full sequence is Ras-related protein RABA2c (217 aa).

Residues 19–27, 38–44, 67–71, 125–128, and 155–157 contribute to the GTP site; these read GDSGVGKSN, CLESKST, DTAGQ, NKSD, and SAL. The short motif at 41–49 is the Effector region element; that stretch reads SKSTIGVEF. Positions 195 to 217 are disordered; the sequence is PGQGTTINVDDTSGGAKRACCSS. 2 S-geranylgeranyl cysteine lipidation sites follow: cysteine 214 and cysteine 215.

It belongs to the small GTPase superfamily. Rab family. Expressed in root tips.

It localises to the endosome membrane. Its subcellular location is the golgi apparatus. It is found in the trans-Golgi network membrane. In terms of biological role, intracellular vesicle trafficking and protein transport. In Arabidopsis thaliana (Mouse-ear cress), this protein is Ras-related protein RABA2c (RABA2C).